The sequence spans 973 residues: GATOR2 complex protein WDR59 (973 aa).

6 WD repeats span residues 57 to 98 (QSKW…GEVC), 103 to 143 (GHTR…KPTV), 146 to 185 (SAVA…TAVE), 189 to 229 (AHLS…KYLN), 232 to 276 (PCQV…TPVH), and 280 to 324 (GHDD…QRLC). Residues 346–365 (DKALQPQDSEPQHSSGHGDE) are disordered. Positions 351 to 360 (PQDSEPQHSS) are enriched in polar residues. In terms of domain architecture, RWD spans 393-494 (QEFSLINVQI…RQLVSWLESV (102 aa)). The C4-type zinc finger occupies 900–920 (YCSHCRSEARGTQCAICKGFT). Positions 901, 904, 913, 916, 926, 937, 942, 945, 948, 959, 963, 965, and 967 each coordinate Zn(2+). The segment at 921-970 (FQCAICHVAVRGSSNFCLTCGHGGHTSHMMEWFRTQEVCPTGCGCHCLLE) adopts an RING-type; atypical zinc-finger fold.

The protein belongs to the WD repeat WDR59 family. Component of the GATOR2 subcomplex, composed of MIOS, SEC13, SEH1L, WDR24 and WDR59. The GATOR2 complex interacts with CASTOR1 and CASTOR2; the interaction is negatively regulated by arginine. The GATOR2 complex interacts with SESN1, SESN2 and SESN3; the interaction is negatively regulated by amino acids. Interacts with DDB1-CUL4A/B E3 ligase complexes.

Its subcellular location is the lysosome membrane. With respect to regulation, the GATOR2 complex is negatively regulated by the upstream amino acid sensors CASTOR1 and SESN2, which sequester the GATOR2 complex in absence of amino acids. In the presence of abundant amino acids, GATOR2 is released from CASTOR1 and SESN2 and activated. Its function is as follows. As a component of the GATOR2 complex, functions as an activator of the amino acid-sensing branch of the mTORC1 signaling pathway. The GATOR2 complex indirectly activates mTORC1 through the inhibition of the GATOR1 subcomplex. GATOR2 probably acts as an E3 ubiquitin-protein ligase toward GATOR1. In the presence of abundant amino acids, the GATOR2 complex mediates ubiquitination of the NPRL2 core component of the GATOR1 complex, leading to GATOR1 inactivation. In the absence of amino acids, GATOR2 is inhibited, activating the GATOR1 complex. The sequence is that of GATOR2 complex protein WDR59 from Gallus gallus (Chicken).